Here is a 137-residue protein sequence, read N- to C-terminus: Peptide methionine sulfoxide reductase MsrB (137 aa).

In terms of domain architecture, MsrB spans 7–129; the sequence is PTENIEKLSD…NSASLNFVDD (123 aa). Cysteine 46, cysteine 49, cysteine 95, and cysteine 98 together coordinate Zn(2+). Cysteine 118 (nucleophile) is an active-site residue.

The protein belongs to the MsrB Met sulfoxide reductase family. Zn(2+) serves as cofactor.

It catalyses the reaction L-methionyl-[protein] + [thioredoxin]-disulfide + H2O = L-methionyl-(R)-S-oxide-[protein] + [thioredoxin]-dithiol. The protein is Peptide methionine sulfoxide reductase MsrB of Yersinia pseudotuberculosis serotype O:1b (strain IP 31758).